A 337-amino-acid chain; its full sequence is Glyceraldehyde-3-phosphate dehydrogenase (337 aa).

NAD(+)-binding positions include 12-13 (RI), Asp-34, and Arg-79. D-glyceraldehyde 3-phosphate-binding positions include 150–152 (SCT), Thr-181, 210–211 (TG), and Arg-233. The active-site Nucleophile is the Cys-151. Position 315 (Asn-315) interacts with NAD(+).

It belongs to the glyceraldehyde-3-phosphate dehydrogenase family. As to quaternary structure, homotetramer.

The protein resides in the cytoplasm. It carries out the reaction D-glyceraldehyde 3-phosphate + phosphate + NAD(+) = (2R)-3-phospho-glyceroyl phosphate + NADH + H(+). It participates in carbohydrate degradation; glycolysis; pyruvate from D-glyceraldehyde 3-phosphate: step 1/5. The chain is Glyceraldehyde-3-phosphate dehydrogenase (GPD) from Omphalotus olearius (Jack o'lantern).